The sequence spans 183 residues: Capsid protein (183 aa).

Positions 136–183 (NAPILSTLPETTVVRRRGRSPRRRTPSPRRRRSESPRRRRSQSRESQC) are disordered. Basic residues predominate over residues 149 to 176 (VRRRGRSPRRRTPSPRRRRSESPRRRRS). Ser155, Ser162, and Ser170 each carry phosphoserine; by host. The 1; half-length repeat unit spans residues 155-160 (SPRRRT). The interval 155–176 (SPRRRTPSPRRRRSESPRRRRS) is 3 X 7 AA repeats of S-P-R-R-R-[PR]-S. The Bipartite nuclear localization signal motif lies at 158–175 (RRTPSPRRRRSESPRRRR). A run of 2 repeats spans residues 162–168 (SPRRRRS) and 170–176 (SPRRRRS). Residues 177–183 (QSRESQC) are RNA binding.

This sequence belongs to the orthohepadnavirus core antigen family. Homodimerizes, then multimerizes. Interacts with cytosol exposed regions of viral L glycoprotein present in the reticulum-to-Golgi compartment. Interacts with human FLNB. Phosphorylated form interacts with host importin alpha; this interaction depends on the exposure of the NLS, which itself depends upon genome maturation and/or phosphorylation of the capsid protein. Interacts with host NUP153. Phosphorylated by host SRPK1, SRPK2, and maybe protein kinase C or GAPDH. Phosphorylation is critical for pregenomic RNA packaging. Protein kinase C phosphorylation is stimulated by HBx protein and may play a role in transport of the viral genome to the nucleus at the late step during the viral replication cycle.

The protein localises to the virion. It is found in the host cytoplasm. In terms of biological role, self assembles to form an icosahedral capsid. Most capsids appear to be large particles with an icosahedral symmetry of T=4 and consist of 240 copies of capsid protein, though a fraction forms smaller T=3 particles consisting of 180 capsid proteins. Entering capsids are transported along microtubules to the nucleus. Phosphorylation of the capsid is thought to induce exposure of nuclear localization signal in the C-terminal portion of the capsid protein that allows binding to the nuclear pore complex via the importin (karyopherin-) alpha and beta. Capsids are imported in intact form through the nuclear pore into the nuclear basket, where it probably binds NUP153. Only capsids that contain the mature viral genome can release the viral DNA and capsid protein into the nucleoplasm. Immature capsids get stuck in the basket. Capsids encapsulate the pre-genomic RNA and the P protein. Pre-genomic RNA is reverse-transcribed into DNA while the capsid is still in the cytoplasm. The capsid can then either be directed to the nucleus, providing more genomes for transcription, or bud through the endoplasmic reticulum to provide new virions. The polypeptide is Capsid protein (Homo sapiens (Human)).